The following is a 75-amino-acid chain: UPF0346 protein LGAS_0911 (75 aa).

The protein belongs to the UPF0346 family.

The polypeptide is UPF0346 protein LGAS_0911 (Lactobacillus gasseri (strain ATCC 33323 / DSM 20243 / BCRC 14619 / CIP 102991 / JCM 1131 / KCTC 3163 / NCIMB 11718 / NCTC 13722 / AM63)).